We begin with the raw amino-acid sequence, 757 residues long: 5-methyltetrahydropteroyltriglutamate--homocysteine methyltransferase (757 aa).

5-methyltetrahydropteroyltri-L-glutamate is bound by residues 16 to 19 (RELK) and Lys-112. Residues 432–434 (IGS) and Glu-485 contribute to the L-homocysteine site. L-methionine is bound by residues 432-434 (IGS) and Glu-485. Residues 516–517 (RC) and Trp-562 contribute to the 5-methyltetrahydropteroyltri-L-glutamate site. An L-homocysteine-binding site is contributed by Asp-600. Asp-600 is a binding site for L-methionine. Glu-606 lines the 5-methyltetrahydropteroyltri-L-glutamate pocket. Zn(2+) contacts are provided by His-642, Cys-644, and Glu-666. His-695 serves as the catalytic Proton donor. Cys-727 contributes to the Zn(2+) binding site.

This sequence belongs to the vitamin-B12 independent methionine synthase family. Requires Zn(2+) as cofactor.

It catalyses the reaction 5-methyltetrahydropteroyltri-L-glutamate + L-homocysteine = tetrahydropteroyltri-L-glutamate + L-methionine. It participates in amino-acid biosynthesis; L-methionine biosynthesis via de novo pathway; L-methionine from L-homocysteine (MetE route): step 1/1. In terms of biological role, catalyzes the transfer of a methyl group from 5-methyltetrahydrofolate to homocysteine resulting in methionine formation. The polypeptide is 5-methyltetrahydropteroyltriglutamate--homocysteine methyltransferase (Actinobacillus pleuropneumoniae serotype 5b (strain L20)).